The chain runs to 164 residues: MVDDSTRKTLSNIPLLQIRAGPREKDVWVQRLKEEYQALIKYVENNKQSGSDWFRLESNKEGTKWFGKCWYMHNLLKYEFEVEFDIPVTYPTTAPEIALPELDGKTAKMYRGGKICLTDHFKPLWARNVPKFGIAHAMALGLAPWLAVEIPDLIEKGIITYKEK.

C116 (glycyl thioester intermediate) is an active-site residue.

Belongs to the ubiquitin-conjugating enzyme family. UFC1 subfamily.

In terms of biological role, E2-like enzyme which forms an intermediate with UFM1 via a thioester linkage. The protein is Ubiquitin-fold modifier-conjugating enzyme 1 of Drosophila sechellia (Fruit fly).